The primary structure comprises 224 residues: Urease accessory protein UreG (224 aa).

Over residues 1–20 (MATHSHPHSHTVPARPRRVR) the composition is skewed to basic residues. The interval 1-25 (MATHSHPHSHTVPARPRRVRKPGEP) is disordered. 32 to 39 (GPVGSGKT) provides a ligand contact to GTP.

Belongs to the SIMIBI class G3E GTPase family. UreG subfamily. Homodimer. UreD, UreF and UreG form a complex that acts as a GTP-hydrolysis-dependent molecular chaperone, activating the urease apoprotein by helping to assemble the nickel containing metallocenter of UreC. The UreE protein probably delivers the nickel.

It localises to the cytoplasm. Functionally, facilitates the functional incorporation of the urease nickel metallocenter. This process requires GTP hydrolysis, probably effectuated by UreG. The polypeptide is Urease accessory protein UreG (Mycobacterium bovis (strain ATCC BAA-935 / AF2122/97)).